The primary structure comprises 154 residues: Phosphopantetheine adenylyltransferase (154 aa).

It belongs to the eukaryotic CoaD family.

The protein resides in the cytoplasm. It carries out the reaction (R)-4'-phosphopantetheine + ATP + H(+) = 3'-dephospho-CoA + diphosphate. It participates in cofactor biosynthesis; coenzyme A biosynthesis. Functionally, reversibly transfers an adenylyl group from ATP to 4'-phosphopantetheine, yielding dephospho-CoA (dPCoA) and pyrophosphate. The protein is Phosphopantetheine adenylyltransferase of Methanosarcina mazei (strain ATCC BAA-159 / DSM 3647 / Goe1 / Go1 / JCM 11833 / OCM 88) (Methanosarcina frisia).